The sequence spans 303 residues: 1D-myo-inositol 2-acetamido-2-deoxy-alpha-D-glucopyranoside deacetylase (303 aa).

3 residues coordinate Zn(2+): H13, D16, and H147.

This sequence belongs to the MshB deacetylase family. Requires Zn(2+) as cofactor.

It carries out the reaction 1D-myo-inositol 2-acetamido-2-deoxy-alpha-D-glucopyranoside + H2O = 1D-myo-inositol 2-amino-2-deoxy-alpha-D-glucopyranoside + acetate. Functionally, catalyzes the deacetylation of 1D-myo-inositol 2-acetamido-2-deoxy-alpha-D-glucopyranoside (GlcNAc-Ins) in the mycothiol biosynthesis pathway. In Mycobacterium tuberculosis (strain ATCC 25177 / H37Ra), this protein is 1D-myo-inositol 2-acetamido-2-deoxy-alpha-D-glucopyranoside deacetylase.